Consider the following 574-residue polypeptide: Serine/threonine-protein kinase fray1 (574 aa).

The span at 24-41 (NHHDLPDSDSDSSSREEE) shows a compositional bias: basic and acidic residues. The tract at residues 24 to 64 (NHHDLPDSDSDSSSREEELMNSSGGGNGKEPIGEKKKLPSH) is disordered. Positions 97 to 357 (YNLIEPIGEG…ASKLLEHKVF (261 aa)) constitute a Protein kinase domain. Residues 103–111 (IGEGTEGRV) and K126 each bind ATP. D221 serves as the catalytic Proton acceptor. Phosphothreonine; by autocatalysis is present on T256. 3 disordered regions span residues 381-447 (YRES…LVNM), 462-514 (LSSG…PEKE), and 532-554 (FGSP…HEHH). 3 stretches are compositionally biased toward low complexity: residues 386 to 403 (SPAS…PSSP), 418 to 441 (KNIK…NLSN), and 462 to 475 (LSSG…SSDL). The segment covering 478-491 (GHLHKIGTPKKKHS) has biased composition (basic residues). Positions 492 to 506 (PSGSIGDSHGSISPP) are enriched in low complexity. Over residues 536-553 (KEGDHNHQHHKSEGDHEH) the composition is skewed to basic and acidic residues.

Belongs to the protein kinase superfamily. STE Ser/Thr protein kinase family. STE20 subfamily. Mn(2+) is required as a cofactor. Undergoes autophosphorylation in the catalytic domain.

The catalysed reaction is L-seryl-[protein] + ATP = O-phospho-L-seryl-[protein] + ADP + H(+). It catalyses the reaction L-threonyl-[protein] + ATP = O-phospho-L-threonyl-[protein] + ADP + H(+). This is Serine/threonine-protein kinase fray1 from Dictyostelium discoideum (Social amoeba).